The chain runs to 264 residues: Thymidylate synthase (264 aa).

R21 is a dUMP binding site. H51 serves as a coordination point for (6R)-5,10-methylene-5,6,7,8-tetrahydrofolate. 126–127 (RR) provides a ligand contact to dUMP. The active-site Nucleophile is C146. DUMP-binding positions include 166-169 (RSAD), N177, and 207-209 (HIY). D169 provides a ligand contact to (6R)-5,10-methylene-5,6,7,8-tetrahydrofolate. (6R)-5,10-methylene-5,6,7,8-tetrahydrofolate is bound at residue S263.

It belongs to the thymidylate synthase family. Bacterial-type ThyA subfamily. In terms of assembly, homodimer.

Its subcellular location is the cytoplasm. The enzyme catalyses dUMP + (6R)-5,10-methylene-5,6,7,8-tetrahydrofolate = 7,8-dihydrofolate + dTMP. It participates in pyrimidine metabolism; dTTP biosynthesis. Its function is as follows. Catalyzes the reductive methylation of 2'-deoxyuridine-5'-monophosphate (dUMP) to 2'-deoxythymidine-5'-monophosphate (dTMP) while utilizing 5,10-methylenetetrahydrofolate (mTHF) as the methyl donor and reductant in the reaction, yielding dihydrofolate (DHF) as a by-product. This enzymatic reaction provides an intracellular de novo source of dTMP, an essential precursor for DNA biosynthesis. The sequence is that of Thymidylate synthase from Exiguobacterium sp. (strain ATCC BAA-1283 / AT1b).